A 287-amino-acid polypeptide reads, in one-letter code: Ret finger protein-like 4A (287 aa).

The RING-type; degenerate zinc finger occupies 11-53 (CYFCFRCLESPVYLNCGYICCLKCLDSLEKSPEGDGVLCPTCS). Residues 78–278 (EPQLNFILTM…LSICPVTNPG (201 aa)) form the B30.2/SPRY domain.

As to quaternary structure, interacts with PSMB1, UBE2A and CCNB1. Expressed in the ovaries and oocytes (at protein level). Expression restricted to gonads. In testis, present at later stages of spermatogeneis and abundant in elongating spermatids.

The protein localises to the cytoplasm. It is found in the nucleus. The sequence is that of Ret finger protein-like 4A (Rfpl4a) from Mus musculus (Mouse).